The primary structure comprises 69 residues: DNA gyrase inhibitor YacG (69 aa).

Residues Cys14, Cys17, Cys33, and Cys37 each contribute to the Zn(2+) site. The disordered stretch occupies residues Ala46–Tyr69. Residues Ser59–Tyr69 are compositionally biased toward acidic residues.

This sequence belongs to the DNA gyrase inhibitor YacG family. Interacts with GyrB. Zn(2+) serves as cofactor.

In terms of biological role, inhibits all the catalytic activities of DNA gyrase by preventing its interaction with DNA. Acts by binding directly to the C-terminal domain of GyrB, which probably disrupts DNA binding by the gyrase. The polypeptide is DNA gyrase inhibitor YacG (Aliivibrio fischeri (strain MJ11) (Vibrio fischeri)).